Consider the following 114-residue polypeptide: Iron-sulfur cluster insertion protein ErpA (114 aa).

Iron-sulfur cluster-binding residues include Cys-42, Cys-106, and Cys-108.

This sequence belongs to the HesB/IscA family. As to quaternary structure, homodimer. The cofactor is iron-sulfur cluster.

Required for insertion of 4Fe-4S clusters for at least IspG. This Cronobacter sakazakii (strain ATCC BAA-894) (Enterobacter sakazakii) protein is Iron-sulfur cluster insertion protein ErpA.